The following is a 256-amino-acid chain: uncharacterized protein (256 aa).

This is an uncharacterized protein from Treponema pallidum (strain Nichols).